The chain runs to 356 residues: 4-hydroxy-3-methylbut-2-en-1-yl diphosphate synthase (flavodoxin) (356 aa).

Residues C264, C267, C299, and E306 each contribute to the [4Fe-4S] cluster site.

This sequence belongs to the IspG family. The cofactor is [4Fe-4S] cluster.

The enzyme catalyses (2E)-4-hydroxy-3-methylbut-2-enyl diphosphate + oxidized [flavodoxin] + H2O + 2 H(+) = 2-C-methyl-D-erythritol 2,4-cyclic diphosphate + reduced [flavodoxin]. It participates in isoprenoid biosynthesis; isopentenyl diphosphate biosynthesis via DXP pathway; isopentenyl diphosphate from 1-deoxy-D-xylulose 5-phosphate: step 5/6. In terms of biological role, converts 2C-methyl-D-erythritol 2,4-cyclodiphosphate (ME-2,4cPP) into 1-hydroxy-2-methyl-2-(E)-butenyl 4-diphosphate. This Campylobacter lari (strain RM2100 / D67 / ATCC BAA-1060) protein is 4-hydroxy-3-methylbut-2-en-1-yl diphosphate synthase (flavodoxin).